Consider the following 510-residue polypeptide: Aspartate kinase FUB3 (510 aa).

ACT domains lie at 372-440 (ILSN…VLPD) and 446-510 (LVGA…KNAM).

The protein belongs to the aspartokinase family.

The catalysed reaction is L-aspartate + ATP = 4-phospho-L-aspartate + ADP. It participates in mycotoxin biosynthesis. In terms of biological role, aspartate kinase; part of the gene cluster that mediates the biosynthesis of fusaric acid, a mycotoxin with low to moderate toxicity to animals and humans, but with high phytotoxic properties. L-aspartate is suggested as fusaric acid amino acid precursor that is activated and further processed to O-acetyl-L-homoserine by cluster enzymes aspartate kinase FUB3 and homoserine O-acetyltransferase FUB5, as well as enzymes of the primary metabolism. The polyketide synthase (PKS) FUB1 generates the triketide trans-2-hexenal which is presumptively released by the hydrolase FUB4 and linked to the NRPS-bound amino acid precursor by NAD(P)-dependent dehydrogenase FUB6. FUB1, FUB4, and the non-canonical NRPS Fub8 may form an enzyme complex. Further processing of the NRPS-bound intermediate might be carried out by FUB6 and the sulfhydrylase FUB7, enabling a spontaneous electrocyclization to close the carbon backbone of fusaric acid. Dihydrofusaric acid is likely to be released via reduction by the thioester reductase (TR) domain of FUB8 whereupon the final oxidation to fusaric acid may (also) be performed by the FMN-dependent dehydrogenase FUB9. This chain is Aspartate kinase FUB3, found in Gibberella moniliformis (strain M3125 / FGSC 7600) (Maize ear and stalk rot fungus).